We begin with the raw amino-acid sequence, 480 residues long: Glutamyl-tRNA(Gln) amidotransferase subunit A (480 aa).

Catalysis depends on charge relay system residues Lys76 and Ser151. The active-site Acyl-ester intermediate is the Ser175.

The protein belongs to the amidase family. GatA subfamily. As to quaternary structure, heterotrimer of A, B and C subunits.

The catalysed reaction is L-glutamyl-tRNA(Gln) + L-glutamine + ATP + H2O = L-glutaminyl-tRNA(Gln) + L-glutamate + ADP + phosphate + H(+). Functionally, allows the formation of correctly charged Gln-tRNA(Gln) through the transamidation of misacylated Glu-tRNA(Gln) in organisms which lack glutaminyl-tRNA synthetase. The reaction takes place in the presence of glutamine and ATP through an activated gamma-phospho-Glu-tRNA(Gln). This chain is Glutamyl-tRNA(Gln) amidotransferase subunit A, found in Exiguobacterium sp. (strain ATCC BAA-1283 / AT1b).